A 159-amino-acid polypeptide reads, in one-letter code: MNIRIGHGFDVHKFGGDSPLLLGGVNVPYETGLIAHSDGDVVLHAISDAVLGAVALGDIGKHFPDTDDDFKGADSRHLLRHCYQLAKDKGFVIGNLDVTIIAQVPKMAPHIQAIREVLSRDFATDLDNINVKATTTEKLGFTGRKEGIAVEAVILLAKA.

Residues aspartate 10 and histidine 12 each coordinate a divalent metal cation. 4-CDP-2-C-methyl-D-erythritol 2-phosphate contacts are provided by residues 10-12 (DVH) and 36-37 (HS). Residue histidine 44 participates in a divalent metal cation binding. 4-CDP-2-C-methyl-D-erythritol 2-phosphate-binding positions include 58 to 60 (DIG), 63 to 67 (FPDTD), 102 to 108 (AQVPKMA), 134 to 137 (TTTE), phenylalanine 141, and arginine 144.

Belongs to the IspF family. As to quaternary structure, homotrimer. A divalent metal cation serves as cofactor.

It carries out the reaction 4-CDP-2-C-methyl-D-erythritol 2-phosphate = 2-C-methyl-D-erythritol 2,4-cyclic diphosphate + CMP. Its pathway is isoprenoid biosynthesis; isopentenyl diphosphate biosynthesis via DXP pathway; isopentenyl diphosphate from 1-deoxy-D-xylulose 5-phosphate: step 4/6. Functionally, involved in the biosynthesis of isopentenyl diphosphate (IPP) and dimethylallyl diphosphate (DMAPP), two major building blocks of isoprenoid compounds. Catalyzes the conversion of 4-diphosphocytidyl-2-C-methyl-D-erythritol 2-phosphate (CDP-ME2P) to 2-C-methyl-D-erythritol 2,4-cyclodiphosphate (ME-CPP) with a corresponding release of cytidine 5-monophosphate (CMP). In Shewanella woodyi (strain ATCC 51908 / MS32), this protein is 2-C-methyl-D-erythritol 2,4-cyclodiphosphate synthase.